The primary structure comprises 2367 residues: RNA1 polyprotein (2367 aa).

At 587–1194 (AKCEDLAVVS…GGRLLLILCS (608 aa)) the chain is on the cytoplasmic side. Residues 776–940 (ELRTLRNDMA…AGVAFNPHDS (165 aa)) form the SF3 helicase domain. 804–811 (GPPGVGKT) is an ATP binding site. The chain crosses the membrane as a helical span at residues 1195–1215 (CMLLGIACYTFFNALAILIGG). Residues 1216–1235 (TSVAAGAAAMVDIGACGSTS) lie on the Lumenal side of the membrane. Residues 1258 to 1468 (PAVWSEETGH…YVCKFPHIEV (211 aa)) form the Peptidase C3 domain. Active-site for picornain 3C-like protease activity residues include H1302, E1339, and C1432. The RdRp catalytic domain occupies 1832–1957 (DKMYCCDYSK…GIHPNIESAF (126 aa)).

This sequence belongs to the nepoviruses RNA1 polyprotein family. Specific enzymatic cleavages by picornain 3C-like protease in vivo yield mature proteins. Picornain 3C-like protease is autocatalytically processed. Post-translationally, VPg is uridylylated by the polymerase and is covalently linked to the 5'-end of genomic RNA. This uridylylated form acts as a nucleotide-peptide primer for the polymerase.

Its subcellular location is the host endoplasmic reticulum lumen. It localises to the host endoplasmic reticulum membrane. The catalysed reaction is RNA(n) + a ribonucleoside 5'-triphosphate = RNA(n+1) + diphosphate. Its function is as follows. Picornain 3C-like protease is a thiol protease that cleaves the P1 and P2 polyproteins. The polypeptide is RNA1 polyprotein (Fragaria vesca (Woodland strawberry)).